The following is a 67-amino-acid chain: Alpha-conotoxin-like Pu1.1 (67 aa).

A signal peptide spans 1-21; sequence MGMRMMFTVFLLVVLATTVVS. The propeptide occupies 22-46; the sequence is FTSDRTSDGRNAAFNAFDLIALTAR. The residue at position 47 (Gln-47) is a Pyrrolidone carboxylic acid. Cystine bridges form between Cys-49/Cys-55 and Cys-50/Cys-63. Residues 51–53 form a lacks the Ser-Xaa-Pro motif that is crucial for potent interaction with nAChR region; sequence NVP. Residue Cys-63 is modified to Cysteine amide.

It belongs to the conotoxin A superfamily. In terms of tissue distribution, expressed by the venom duct.

It is found in the secreted. Functionally, alpha-conotoxins act on postsynaptic membranes, they bind to the nicotinic acetylcholine receptors (nAChR) and thus inhibit them. Has possibly a distinct nAChR binding mode from other alpha-conotoxins, due to a different three residue motif (lacks the Ser-Xaa-Pro motif). The protein is Alpha-conotoxin-like Pu1.1 of Conus pulicarius (Flea-bitten cone).